Reading from the N-terminus, the 274-residue chain is 2,3,4,5-tetrahydropyridine-2,6-dicarboxylate N-succinyltransferase (274 aa).

The substrate site is built by R104 and D141.

It belongs to the transferase hexapeptide repeat family. Homotrimer.

The protein localises to the cytoplasm. The catalysed reaction is (S)-2,3,4,5-tetrahydrodipicolinate + succinyl-CoA + H2O = (S)-2-succinylamino-6-oxoheptanedioate + CoA. Its pathway is amino-acid biosynthesis; L-lysine biosynthesis via DAP pathway; LL-2,6-diaminopimelate from (S)-tetrahydrodipicolinate (succinylase route): step 1/3. In Idiomarina loihiensis (strain ATCC BAA-735 / DSM 15497 / L2-TR), this protein is 2,3,4,5-tetrahydropyridine-2,6-dicarboxylate N-succinyltransferase.